Reading from the N-terminus, the 505-residue chain is Aspartyl/glutamyl-tRNA(Asn/Gln) amidotransferase subunit B (505 aa).

Belongs to the GatB/GatE family. GatB subfamily. In terms of assembly, heterotrimer of A, B and C subunits.

The enzyme catalyses L-glutamyl-tRNA(Gln) + L-glutamine + ATP + H2O = L-glutaminyl-tRNA(Gln) + L-glutamate + ADP + phosphate + H(+). It carries out the reaction L-aspartyl-tRNA(Asn) + L-glutamine + ATP + H2O = L-asparaginyl-tRNA(Asn) + L-glutamate + ADP + phosphate + 2 H(+). Its function is as follows. Allows the formation of correctly charged Asn-tRNA(Asn) or Gln-tRNA(Gln) through the transamidation of misacylated Asp-tRNA(Asn) or Glu-tRNA(Gln) in organisms which lack either or both of asparaginyl-tRNA or glutaminyl-tRNA synthetases. The reaction takes place in the presence of glutamine and ATP through an activated phospho-Asp-tRNA(Asn) or phospho-Glu-tRNA(Gln). The protein is Aspartyl/glutamyl-tRNA(Asn/Gln) amidotransferase subunit B of Streptomyces avermitilis (strain ATCC 31267 / DSM 46492 / JCM 5070 / NBRC 14893 / NCIMB 12804 / NRRL 8165 / MA-4680).